Reading from the N-terminus, the 492-residue chain is UDP-N-acetylmuramoyl-L-alanyl-D-glutamate--2,6-diaminopimelate ligase (492 aa).

Ser30 is a UDP-N-acetyl-alpha-D-muramoyl-L-alanyl-D-glutamate binding site. 114–120 contacts ATP; the sequence is GTNGKTS. UDP-N-acetyl-alpha-D-muramoyl-L-alanyl-D-glutamate-binding positions include 156 to 157, Ser183, Gln189, and Arg191; that span reads TT. Lys223 is subject to N6-carboxylysine. Meso-2,6-diaminopimelate-binding positions include Arg389, 413–416, Gly462, and Glu466; that span reads DNPR. Residues 413–416 carry the Meso-diaminopimelate recognition motif motif; the sequence is DNPR.

Belongs to the MurCDEF family. MurE subfamily. Mg(2+) serves as cofactor. Carboxylation is probably crucial for Mg(2+) binding and, consequently, for the gamma-phosphate positioning of ATP.

Its subcellular location is the cytoplasm. It carries out the reaction UDP-N-acetyl-alpha-D-muramoyl-L-alanyl-D-glutamate + meso-2,6-diaminopimelate + ATP = UDP-N-acetyl-alpha-D-muramoyl-L-alanyl-gamma-D-glutamyl-meso-2,6-diaminopimelate + ADP + phosphate + H(+). The protein operates within cell wall biogenesis; peptidoglycan biosynthesis. In terms of biological role, catalyzes the addition of meso-diaminopimelic acid to the nucleotide precursor UDP-N-acetylmuramoyl-L-alanyl-D-glutamate (UMAG) in the biosynthesis of bacterial cell-wall peptidoglycan. The chain is UDP-N-acetylmuramoyl-L-alanyl-D-glutamate--2,6-diaminopimelate ligase from Neisseria meningitidis serogroup B (strain ATCC BAA-335 / MC58).